Here is a 178-residue protein sequence, read N- to C-terminus: MSHHPDLSVSLDQLLLRKEVRVRQQGEWLKRHSLPLVSFTVNMPGAFKLNAASQTVMDAGMRAIQELCQKTGWRQVACQLLVEKTGPEAFVVIQAPSASMLKKAMMKIEREHPLGRLMDLDVIDVDGHIISRQGAQLPRRRCLLCERDAVICARSRRHSVEALLAKIEEMTHDYSCCA.

It belongs to the CitX family.

It catalyses the reaction apo-[citrate lyase ACP] + 2'-(5''-triphospho-alpha-D-ribosyl)-3'-dephospho-CoA = holo-[citrate lyase ACP] + diphosphate. Transfers 2-(5''-triphosphoribosyl)-3'-dephosphocoenzyme-A on a serine residue to the apo-acyl carrier protein (gamma chain) of the citrate lyase to yield holo-acyl carrier protein. The protein is Probable apo-citrate lyase phosphoribosyl-dephospho-CoA transferase of Vibrio cholerae serotype O1 (strain ATCC 39541 / Classical Ogawa 395 / O395).